Consider the following 341-residue polypeptide: UDP-3-O-(3-hydroxymyristoyl)glucosamine N-acyltransferase (341 aa).

Residue His239 is the Proton acceptor of the active site.

Belongs to the transferase hexapeptide repeat family. LpxD subfamily. In terms of assembly, homotrimer.

It catalyses the reaction a UDP-3-O-[(3R)-3-hydroxyacyl]-alpha-D-glucosamine + a (3R)-hydroxyacyl-[ACP] = a UDP-2-N,3-O-bis[(3R)-3-hydroxyacyl]-alpha-D-glucosamine + holo-[ACP] + H(+). The enzyme catalyses UDP-3-O-[(3R)-3-hydroxytetradecanoyl]-alpha-D-glucosamine + (3R)-hydroxytetradecanoyl-[ACP] = UDP-2-N,3-O-bis[(3R)-3-hydroxytetradecanoyl]-alpha-D-glucosamine + holo-[ACP] + H(+). The protein operates within glycolipid biosynthesis; lipid IV(A) biosynthesis; lipid IV(A) from (3R)-3-hydroxytetradecanoyl-[acyl-carrier-protein] and UDP-N-acetyl-alpha-D-glucosamine: step 3/6. Its function is as follows. Catalyzes the N-acylation of UDP-3-O-(hydroxytetradecanoyl)glucosamine using 3-hydroxytetradecanoyl-ACP as the acyl donor. Is involved in the biosynthesis of lipid A, a phosphorylated glycolipid that anchors the lipopolysaccharide to the outer membrane of the cell. This chain is UDP-3-O-(3-hydroxymyristoyl)glucosamine N-acyltransferase, found in Escherichia coli (strain UTI89 / UPEC).